Here is a 312-residue protein sequence, read N- to C-terminus: Methionyl-tRNA formyltransferase (312 aa).

Ser113–Pro116 is a binding site for (6S)-5,6,7,8-tetrahydrofolate.

This sequence belongs to the Fmt family.

The enzyme catalyses L-methionyl-tRNA(fMet) + (6R)-10-formyltetrahydrofolate = N-formyl-L-methionyl-tRNA(fMet) + (6S)-5,6,7,8-tetrahydrofolate + H(+). Attaches a formyl group to the free amino group of methionyl-tRNA(fMet). The formyl group appears to play a dual role in the initiator identity of N-formylmethionyl-tRNA by promoting its recognition by IF2 and preventing the misappropriation of this tRNA by the elongation apparatus. This is Methionyl-tRNA formyltransferase from Francisella philomiragia subsp. philomiragia (strain ATCC 25017 / CCUG 19701 / FSC 153 / O#319-036).